We begin with the raw amino-acid sequence, 134 residues long: Putative protein KRIP1 (134 aa).

Residues 1-134 (MSPVHRSRTS…PDPALPLQML (134 aa)) form a disordered region. Polar residues-rich tracts occupy residues 9 to 24 (TSQT…TLSF), 43 to 55 (SQPN…SHVS), and 64 to 79 (CSQS…TNPN). Over residues 119 to 128 (PAKPALPDPA) the composition is skewed to pro residues.

As to expression, abundant expression is found in prostate, restricted to cells of epithelial origin in normal and diseased glands. Very low expression is detected in pancreas and ovary.

It is found in the cytoplasm. It localises to the nucleus. The protein is Putative protein KRIP1 (KLKP1) of Homo sapiens (Human).